The primary structure comprises 229 residues: Large ribosomal subunit protein uL1 (229 aa).

It belongs to the universal ribosomal protein uL1 family. In terms of assembly, part of the 50S ribosomal subunit.

Functionally, binds directly to 23S rRNA. The L1 stalk is quite mobile in the ribosome, and is involved in E site tRNA release. Its function is as follows. Protein L1 is also a translational repressor protein, it controls the translation of the L11 operon by binding to its mRNA. The chain is Large ribosomal subunit protein uL1 from Flavobacterium johnsoniae (strain ATCC 17061 / DSM 2064 / JCM 8514 / BCRC 14874 / CCUG 350202 / NBRC 14942 / NCIMB 11054 / UW101) (Cytophaga johnsonae).